The following is a 312-amino-acid chain: tRNA-cytidine(32) 2-sulfurtransferase (312 aa).

A PP-loop motif motif is present at residues 47–52 (SGGKDS). [4Fe-4S] cluster is bound by residues C122, C125, and C213.

Belongs to the TtcA family. As to quaternary structure, homodimer. Requires Mg(2+) as cofactor. It depends on [4Fe-4S] cluster as a cofactor.

It is found in the cytoplasm. It carries out the reaction cytidine(32) in tRNA + S-sulfanyl-L-cysteinyl-[cysteine desulfurase] + AH2 + ATP = 2-thiocytidine(32) in tRNA + L-cysteinyl-[cysteine desulfurase] + A + AMP + diphosphate + H(+). Its pathway is tRNA modification. Catalyzes the ATP-dependent 2-thiolation of cytidine in position 32 of tRNA, to form 2-thiocytidine (s(2)C32). The sulfur atoms are provided by the cysteine/cysteine desulfurase (IscS) system. This chain is tRNA-cytidine(32) 2-sulfurtransferase, found in Shewanella frigidimarina (strain NCIMB 400).